The following is a 122-amino-acid chain: MFSLQHVLLILISLGQVYSQQVHHNAGRKFPQWLTGLIAMTVFLFLVLVVYVAKMFWDKRSQESINMKDIEEVVANGTSECCEARKENQYISCNMKDLRSSEHIHAYENPIEVNDNVRSTAM.

Residues 33-53 (WLTGLIAMTVFLFLVLVVYVA) traverse the membrane as a helical segment.

It belongs to the PDZK1-interacting protein 1/SMIM24 family. In terms of tissue distribution, expressed in prospective pronephric mesoderm at the late gastrula stage. After neurulation, expressed in the intermediate mesoderm, eye placode and blood islands. Expression becomes restricted to the pronephric proximal tubule during embryogenesis, but is absent from the connecting tubules.

It is found in the membrane. Functionally, essential for pronephric tubule development, acting upstream of pax8 and lhx1/lim1 and downstream of retinoic acid signaling to induce pronephric mesoderm to form pronephric tubule-specific cells. The polypeptide is Proximal tubules-expressed gene protein (pteg) (Xenopus laevis (African clawed frog)).